The primary structure comprises 141 residues: Large ribosomal subunit protein uL11 (141 aa).

The protein belongs to the universal ribosomal protein uL11 family. In terms of assembly, part of the ribosomal stalk of the 50S ribosomal subunit. Interacts with L10 and the large rRNA to form the base of the stalk. L10 forms an elongated spine to which L12 dimers bind in a sequential fashion forming a multimeric L10(L12)X complex. In terms of processing, one or more lysine residues are methylated.

Its function is as follows. Forms part of the ribosomal stalk which helps the ribosome interact with GTP-bound translation factors. This Aster yellows witches'-broom phytoplasma (strain AYWB) protein is Large ribosomal subunit protein uL11.